The sequence spans 79 residues: ATP synthase subunit c (79 aa).

The next 2 helical transmembrane spans lie at 11 to 31 (MAAAIMMGLAAIGAAIGIGIL) and 53 to 73 (FFIVMGLVDAIPMIAVGLGLY).

It belongs to the ATPase C chain family. F-type ATPases have 2 components, F(1) - the catalytic core - and F(0) - the membrane proton channel. F(1) has five subunits: alpha(3), beta(3), gamma(1), delta(1), epsilon(1). F(0) has three main subunits: a(1), b(2) and c(10-14). The alpha and beta chains form an alternating ring which encloses part of the gamma chain. F(1) is attached to F(0) by a central stalk formed by the gamma and epsilon chains, while a peripheral stalk is formed by the delta and b chains.

It is found in the cell inner membrane. F(1)F(0) ATP synthase produces ATP from ADP in the presence of a proton or sodium gradient. F-type ATPases consist of two structural domains, F(1) containing the extramembraneous catalytic core and F(0) containing the membrane proton channel, linked together by a central stalk and a peripheral stalk. During catalysis, ATP synthesis in the catalytic domain of F(1) is coupled via a rotary mechanism of the central stalk subunits to proton translocation. Functionally, key component of the F(0) channel; it plays a direct role in translocation across the membrane. A homomeric c-ring of between 10-14 subunits forms the central stalk rotor element with the F(1) delta and epsilon subunits. In Proteus mirabilis (strain HI4320), this protein is ATP synthase subunit c.